The primary structure comprises 220 residues: Adenylate kinase (220 aa).

ATP is bound at residue 12 to 17 (GAGKGT). The NMP stretch occupies residues 32–62 (STGDIFRDIVKKENDELGKKIKEIMERGELV). AMP-binding positions include T33, R38, 60–62 (ELV), 88–91 (GYPR), and Q95. The tract at residues 129-166 (ARRICPKCGRIYNLISLPPKEDELCDDCKVKLVQREDD) is LID. R130 contacts ATP. Residues C133 and C136 each coordinate Zn(2+). 139-140 (IY) is an ATP binding site. C153 and C156 together coordinate Zn(2+). AMP is bound by residues R163 and R174. I202 is an ATP binding site.

The protein belongs to the adenylate kinase family. In terms of assembly, monomer.

It localises to the cytoplasm. The enzyme catalyses AMP + ATP = 2 ADP. Its pathway is purine metabolism; AMP biosynthesis via salvage pathway; AMP from ADP: step 1/1. Its function is as follows. Catalyzes the reversible transfer of the terminal phosphate group between ATP and AMP. Plays an important role in cellular energy homeostasis and in adenine nucleotide metabolism. This chain is Adenylate kinase, found in Thermotoga petrophila (strain ATCC BAA-488 / DSM 13995 / JCM 10881 / RKU-1).